The chain runs to 329 residues: Tetraacyldisaccharide 4'-kinase (329 aa).

58 to 65 (SVGGTGKT) is an ATP binding site.

Belongs to the LpxK family.

It catalyses the reaction a lipid A disaccharide + ATP = a lipid IVA + ADP + H(+). Its pathway is glycolipid biosynthesis; lipid IV(A) biosynthesis; lipid IV(A) from (3R)-3-hydroxytetradecanoyl-[acyl-carrier-protein] and UDP-N-acetyl-alpha-D-glucosamine: step 6/6. Functionally, transfers the gamma-phosphate of ATP to the 4'-position of a tetraacyldisaccharide 1-phosphate intermediate (termed DS-1-P) to form tetraacyldisaccharide 1,4'-bis-phosphate (lipid IVA). In Idiomarina loihiensis (strain ATCC BAA-735 / DSM 15497 / L2-TR), this protein is Tetraacyldisaccharide 4'-kinase.